An 83-amino-acid chain; its full sequence is Apolipoprotein C-I (83 aa).

The first 26 residues, 1–26, serve as a signal peptide directing secretion; it reads MRLILSLPVLAVVLAMVLEGPAPAQA.

Belongs to the apolipoprotein C1 family.

The protein localises to the secreted. Functionally, inhibitor of lipoprotein binding to the low density lipoprotein (LDL) receptor, LDL receptor-related protein, and very low density lipoprotein (VLDL) receptor. Associates with high density lipoproteins (HDL) and the triacylglycerol-rich lipoproteins in the plasma and makes up about 10% of the protein of the VLDL and 2% of that of HDL. Appears to interfere directly with fatty acid uptake and is also the major plasma inhibitor of cholesteryl ester transfer protein (CETP). Binds free fatty acids and reduces their intracellular esterification. Modulates the interaction of APOE with beta-migrating VLDL and inhibits binding of beta-VLDL to the LDL receptor-related protein. This Eonycteris spelaea (Lesser dawn bat) protein is Apolipoprotein C-I (APOC1).